Reading from the N-terminus, the 1153-residue chain is PPi-type phosphoenolpyruvate carboxykinase 2 (1153 aa).

A coiled-coil region spans residues 1085–1131 (RQKLEVAKLNKDLAYLNKTIAEKPRLVETLNKQIAAVKEELQYVSSE).

The protein belongs to the PPi-type phosphoenolpyruvate carboxykinase family. As to quaternary structure, monomer and trimer; forms heterotrimers with PEPCK1 and PEPCK3.

It localises to the cytoplasm. The protein localises to the cytosol. The catalysed reaction is oxaloacetate + diphosphate = phosphoenolpyruvate + phosphate + CO2. Functionally, inorganic pyrophosphate (PPi)-dependent phosphoenolpyruvate carboxykinase, which regulates the carbon flow of the central metabolism by fixing CO(2) to phosphoenolpyruvate to produce oxaloacetate. Can also produce pyruvate and diphosphate from phosphoenolpyruvate and phosphate. This is PPi-type phosphoenolpyruvate carboxykinase 2 from Entamoeba histolytica (strain ATCC 30459 / HM-1:IMSS / ABRM).